Consider the following 103-residue polypeptide: Large ribosomal subunit protein bL21 (103 aa).

Belongs to the bacterial ribosomal protein bL21 family. Part of the 50S ribosomal subunit. Contacts protein L20.

Functionally, this protein binds to 23S rRNA in the presence of protein L20. This Pectobacterium carotovorum subsp. carotovorum (strain PC1) protein is Large ribosomal subunit protein bL21.